The following is a 962-amino-acid chain: Synphilin-1 (962 aa).

3 disordered regions span residues 80 to 99 (SPLK…DQKN), 104 to 137 (YQKG…EPSQ), and 222 to 249 (TALR…PAYE). 4 ANK repeats span residues 348-379 (NGNN…CLNE), 383-412 (EQLT…AIAE), 418-447 (DFPS…EQGI), and 455-484 (EGNS…NVTM). Residues 522-548 (VKLTKQLKEQTVERVTLQSQLQQLLEA) adopt a coiled-coil conformation. The interval 548 to 590 (AQKSEGKSLPSSPSSPSSPASTKSQWKALDTDEESTGKSKVGA) is disordered. Residues 554-571 (KSLPSSPSSPSSPASTKS) show a composition bias toward low complexity. An ANK 5 repeat occupies 602–631 (VSSRARTKGKDEDSDKILRQLLGKEISENV). The segment covering 667–684 (RQLMQRSLSESDTDSNNS) has biased composition (low complexity). The disordered stretch occupies residues 667–852 (RQLMQRSLSE…QRTSESGEQM (186 aa)). Basic and acidic residues predominate over residues 685–699 (EDPKNTPVKRADRPR). One copy of the ANK 6 repeat lies at 698–728 (PRPQPIVESVENVDSAESLHLMIKKHSLASG). A compositionally biased stretch (polar residues) spans 772-790 (PSTEATQSSPDSTAAQKVA). A compositionally biased stretch (basic and acidic residues) spans 831-840 (NGEKDKDKGR).

In terms of assembly, associates with SNCA, RNF19A and PRKN. Ubiquitinated; mediated by SIAH1 or RNF19A and leading to its subsequent proteasomal degradation.

This is Synphilin-1 (Sncaip) from Mus musculus (Mouse).